Reading from the N-terminus, the 516-residue chain is Squalene epoxidase 4 (516 aa).

2 helical membrane passes run 2–22 (TYAW…FHLI) and 43–63 (ATDV…YALA). Residues 53–54 (VA), 73–74 (ER), arginine 81, arginine 153, valine 169, aspartate 335, and methionine 348 contribute to the FAD site. Residues 435–455 (ILGGMNPHPLTLVLHLVAITL) traverse the membrane as a helical segment.

Belongs to the squalene monooxygenase family. FAD is required as a cofactor. As to expression, expressed mainly in seedlings and inflorescences.

Its subcellular location is the membrane. The catalysed reaction is squalene + reduced [NADPH--hemoprotein reductase] + O2 = (S)-2,3-epoxysqualene + oxidized [NADPH--hemoprotein reductase] + H2O + H(+). It participates in terpene metabolism; lanosterol biosynthesis; lanosterol from farnesyl diphosphate: step 2/3. In terms of biological role, catalyzes the stereospecific oxidation of squalene to (S)-2,3-epoxysqualene, and is considered to be a rate-limiting enzyme in steroid biosynthesis. The chain is Squalene epoxidase 4 (SQE4) from Arabidopsis thaliana (Mouse-ear cress).